Here is a 1345-residue protein sequence, read N- to C-terminus: Mediator of RNA polymerase II transcription subunit 13 (1345 aa).

Disordered regions lie at residues 363–387 (KSQTNQQQTSSNSKVSPSDAASPYP) and 402–537 (FMAS…AESG). Positions 364 to 375 (SQTNQQQTSSNS) are enriched in low complexity. The segment covering 406-415 (PSVSGNSNEL) has biased composition (polar residues). Over residues 469–482 (LFGEEDEDEDDADL) the composition is skewed to acidic residues. The span at 486–501 (SNNDSTGESNANNSKG) shows a compositional bias: polar residues.

It belongs to the Mediator complex subunit 13 family. Component of the SRB8-11 complex, which itself associates with the Mediator complex.

The protein localises to the nucleus. Component of the SRB8-11 complex. The SRB8-11 complex is a regulatory module of the Mediator complex which is itself involved in regulation of basal and activated RNA polymerase II-dependent transcription. The SRB8-11 complex may be involved in the transcriptional repression of a subset of genes regulated by Mediator. It may inhibit the association of the Mediator complex with RNA polymerase II to form the holoenzyme complex. This is Mediator of RNA polymerase II transcription subunit 13 (SSN2) from Candida glabrata (strain ATCC 2001 / BCRC 20586 / JCM 3761 / NBRC 0622 / NRRL Y-65 / CBS 138) (Yeast).